A 452-amino-acid chain; its full sequence is MAQHFSLAACDVVGFDLDHTLCCYNLPESARLIYNSFAQFLVKEKGYDKGLLTVTPEDWDFCCKGLALDLEDGNFIKLADNGTVLRASHGTKMLSAEALAEEFGRKEWKHFMPDTGMAFRSGKYYFYDNYFDLPGALLCARVVDSLTKQNNGQKPFDFWKDIVAGIQHNYKMSAFKENCGIYFPEIKRDPGKYLHTCPESVKKWLRQLKNAGKILMLITSSHSDYCRLLCQYILGNDFEDLFDIVITNALKPGFFSHLPSQRPFRTLENDEEREALPFLDKPGWYSQGNAVHLYELLKKMTGKPEPKVVYFGDSMHSDIFPACHYSNWETVLILEELRGDKDGKPEESEPEEKKGKYEGSKAKPLNTSSKKWGSFFIDSVSGLENREDSLVYTWSCKRISAYSTIAIPSIEAIAELPLDYKFTRFSSNNSKTAGYYPNPPLVLSNAGKLTAK.

Residue D16 is the Nucleophile of the active site. Residues D16 and D18 each coordinate Mg(2+). D18 (proton donor) is an active-site residue. An N6-acetyllysine modification is found at K171. Mg(2+) is bound at residue D313. The span at 339–361 shows a compositional bias: basic and acidic residues; it reads GDKDGKPEESEPEEKKGKYEGSK. A disordered region spans residues 339–365; it reads GDKDGKPEESEPEEKKGKYEGSKAKPL.

This sequence belongs to the 5'(3')-deoxyribonucleotidase family.

This is 5'-nucleotidase domain-containing protein 1 (NT5DC1) from Bos taurus (Bovine).